Consider the following 178-residue polypeptide: Large ribosomal subunit protein bL25 (178 aa).

It belongs to the bacterial ribosomal protein bL25 family. CTC subfamily. In terms of assembly, part of the 50S ribosomal subunit; part of the 5S rRNA/L5/L18/L25 subcomplex. Contacts the 5S rRNA. Binds to the 5S rRNA independently of L5 and L18.

Its function is as follows. This is one of the proteins that binds to the 5S RNA in the ribosome where it forms part of the central protuberance. The sequence is that of Large ribosomal subunit protein bL25 from Helicobacter hepaticus (strain ATCC 51449 / 3B1).